Here is an 840-residue protein sequence, read N- to C-terminus: Translation initiation factor IF-2 (840 aa).

The segment at 1–251 (MTEEKKFSSS…GPAVPATERK (251 aa)) is disordered. Polar residues-rich tracts occupy residues 38 to 50 (DGTN…TPRS) and 65 to 83 (NRHT…ASRP). The span at 84–102 (NQSKSQGQGGRNNQRPGSR) shows a compositional bias: low complexity. Basic and acidic residues-rich tracts occupy residues 110 to 135 (PMIR…KTDN) and 158 to 168 (KPAEQSKKAAE). Low complexity predominate over residues 169-207 (KPAQTKPKTAETKTTATTTQSGTGKFGGALASGNNSARN). Basic residues predominate over residues 230–239 (GSKKSRRIAA). The 170-residue stretch at 341 to 510 (ARPPVVTIMG…LLQAEVLELK (170 aa)) folds into the tr-type G domain. The segment at 350–357 (GHVDHGKT) is G1. 350 to 357 (GHVDHGKT) provides a ligand contact to GTP. Residues 375-379 (GITQH) form a G2 region. Residues 396 to 399 (DTPG) form a G3 region. GTP is bound by residues 396–400 (DTPGH) and 450–453 (NKID). The segment at 450–453 (NKID) is G4. Positions 486-488 (SAK) are G5.

It belongs to the TRAFAC class translation factor GTPase superfamily. Classic translation factor GTPase family. IF-2 subfamily.

The protein resides in the cytoplasm. In terms of biological role, one of the essential components for the initiation of protein synthesis. Protects formylmethionyl-tRNA from spontaneous hydrolysis and promotes its binding to the 30S ribosomal subunits. Also involved in the hydrolysis of GTP during the formation of the 70S ribosomal complex. The protein is Translation initiation factor IF-2 of Leuconostoc citreum (strain KM20).